Here is a 452-residue protein sequence, read N- to C-terminus: Neuronal acetylcholine receptor subunit alpha-5 (452 aa).

Positions 1–27 are cleaved as a signal peptide; it reads MVQLLAGRWRPTGARRGTRGGLPELSS. The Extracellular segment spans residues 28 to 239; it reads AAKHEDSLFR…VIKRLPLFYT (212 aa). N-linked (GlcNAc...) asparagine glycosylation is found at Asn-140, Asn-168, and Asn-214. Cys-155 and Cys-169 are joined by a disulfide. Cys-219 and Cys-220 are joined by a disulfide. Helical transmembrane passes span 240-260, 269-289, and 302-322; these read LFLIIPCIGLSFLTVVVFYLP, LCTSVLVSLTVFLLVIEEIIP, and LVFTMIFVTLSIMVTVFAINI. Topologically, residues 323 to 414 are cytoplasmic; it reads HHRSSSTHNA…KFIAQVLDRM (92 aa). A helical transmembrane segment spans residues 415–435; it reads FLWTFLLVSIIGTLGLFVPVI. Residues 436–452 are Extracellular-facing; that stretch reads YKWANIIVPVHIGNTIK.

The protein belongs to the ligand-gated ion channel (TC 1.A.9) family. Acetylcholine receptor (TC 1.A.9.1) subfamily. Alpha-5/CHRNA5 sub-subfamily. Neuronal AChR that forms heteropentamers composed of two different type of subunits: alpha and non-alpha (beta). CHRNA5/alpha-5 subunit is only able to form functional nAChRs when co-assembled with another alpha subunit, can be combined to CHRNA4/alpha-4 or CHRNA3/alpha-3 and CHRNB4/beta-4 or CHRNB2/beta-2 to give rise to functional receptors. Interacts with LYPD6.

Its subcellular location is the synaptic cell membrane. It is found in the cell membrane. It carries out the reaction Ca(2+)(in) = Ca(2+)(out). The catalysed reaction is K(+)(in) = K(+)(out). The enzyme catalyses Na(+)(in) = Na(+)(out). Its activity is regulated as follows. Activated by a myriad of ligands such as acetylcholine, cytisine, nicotine, choline and epibatidine. Functionally, component of neuronal acetylcholine receptors (nAChRs) that function as pentameric, ligand-gated cation channels with high calcium permeability among other activities. nAChRs are excitatory neurotrasnmitter receptors formed by a collection of nAChR subunits known to mediate synaptic transmission in the nervous system and the neuromuscular junction. Each nAchR subunit confers differential attributes to channel properties, including activation, deactivation and desensitization kinetics, pH sensitivity, cation permeability, and binding to allosteric modulators. Has an accessory rather than functional role and is only able to form functional nAChRs when co-assembled with another beta subunit. Participates in pentameric assemblies along with CHRNA3, CHRNA4, CHRNB2 and CHRNB4. Increases receptor sensitivity to acetylcholine and nicotine when associated with CHRNA4 and CHRNB2. Plays a role in nicotine addiction. The chain is Neuronal acetylcholine receptor subunit alpha-5 (Chrna5) from Rattus norvegicus (Rat).